The sequence spans 177 residues: Large ribosomal subunit protein uL6 (177 aa).

The protein belongs to the universal ribosomal protein uL6 family. Part of the 50S ribosomal subunit.

Functionally, this protein binds to the 23S rRNA, and is important in its secondary structure. It is located near the subunit interface in the base of the L7/L12 stalk, and near the tRNA binding site of the peptidyltransferase center. The polypeptide is Large ribosomal subunit protein uL6 (Rhizobium etli (strain ATCC 51251 / DSM 11541 / JCM 21823 / NBRC 15573 / CFN 42)).